A 391-amino-acid chain; its full sequence is Eukaryotic initiation factor 4A-3 (391 aa).

The Q motif motif lies at 18-46; the sequence is ASFAEMGIKDDLLRGVYQYGFEKPSAIQQ. The Helicase ATP-binding domain maps to 49–219; sequence VLPIISGRDV…SKFMTDPVRI (171 aa). 62–69 contacts ATP; that stretch reads AQSGTGKT. Positions 167 to 170 match the DEAD box motif; that stretch reads DESD. The 162-residue stretch at 230 to 391 folds into the Helicase C-terminal domain; that stretch reads GIKQFFVAVE…EMPMNVADLI (162 aa).

It belongs to the DEAD box helicase family. eIF4A subfamily. In terms of assembly, eIF4F is a multi-subunit complex, the composition of which varies with external and internal environmental conditions. It is composed of at least EIF4A, EIF4E and EIF4G.

It catalyses the reaction ATP + H2O = ADP + phosphate + H(+). ATP-dependent RNA helicase which is a subunit of the eIF4F complex involved in cap recognition and is required for mRNA binding to ribosome. In the current model of translation initiation, eIF4A unwinds RNA secondary structures in the 5'-UTR of mRNAs which is necessary to allow efficient binding of the small ribosomal subunit, and subsequent scanning for the initiator codon. This is Eukaryotic initiation factor 4A-3 from Nicotiana plumbaginifolia (Leadwort-leaved tobacco).